A 100-amino-acid chain; its full sequence is Small ribosomal subunit protein uS14c (100 aa).

It belongs to the universal ribosomal protein uS14 family. In terms of assembly, part of the 30S ribosomal subunit.

It localises to the plastid. The protein resides in the chloroplast. Binds 16S rRNA, required for the assembly of 30S particles. In Morus indica (Mulberry), this protein is Small ribosomal subunit protein uS14c.